A 391-amino-acid polypeptide reads, in one-letter code: Argininosuccinate synthase (391 aa).

Residue 6-14 participates in ATP binding; it reads AYSGGLDTT. L-citrulline is bound at residue Y84. G114 contacts ATP. L-aspartate is bound by residues T116, N120, and D121. N120 is an L-citrulline binding site. L-citrulline is bound by residues R124, S171, S180, E253, and Y265.

This sequence belongs to the argininosuccinate synthase family. Type 1 subfamily. As to quaternary structure, homotetramer.

It is found in the cytoplasm. It carries out the reaction L-citrulline + L-aspartate + ATP = 2-(N(omega)-L-arginino)succinate + AMP + diphosphate + H(+). The protein operates within amino-acid biosynthesis; L-arginine biosynthesis; L-arginine from L-ornithine and carbamoyl phosphate: step 2/3. The sequence is that of Argininosuccinate synthase from Saccharolobus solfataricus (strain ATCC 35092 / DSM 1617 / JCM 11322 / P2) (Sulfolobus solfataricus).